The sequence spans 283 residues: Thymidylate synthase (283 aa).

Residue R22 participates in dUMP binding. The active-site Nucleophile is the C160. DUMP is bound by residues R180–D183, N191, and H221–Y223. Residue D183 participates in (6R)-5,10-methylene-5,6,7,8-tetrahydrofolate binding. S282 contacts (6R)-5,10-methylene-5,6,7,8-tetrahydrofolate.

This sequence belongs to the thymidylate synthase family. Bacterial-type ThyA subfamily. Homodimer.

It is found in the cytoplasm. The catalysed reaction is dUMP + (6R)-5,10-methylene-5,6,7,8-tetrahydrofolate = 7,8-dihydrofolate + dTMP. It functions in the pathway pyrimidine metabolism; dTTP biosynthesis. Its function is as follows. Catalyzes the reductive methylation of 2'-deoxyuridine-5'-monophosphate (dUMP) to 2'-deoxythymidine-5'-monophosphate (dTMP) while utilizing 5,10-methylenetetrahydrofolate (mTHF) as the methyl donor and reductant in the reaction, yielding dihydrofolate (DHF) as a by-product. This enzymatic reaction provides an intracellular de novo source of dTMP, an essential precursor for DNA biosynthesis. The sequence is that of Thymidylate synthase from Haemophilus influenzae (strain PittEE).